We begin with the raw amino-acid sequence, 259 residues long: Ribosomal RNA small subunit methyltransferase A (259 aa).

Residues Asn12, Leu14, Gly39, Glu60, Asp84, and Asn102 each coordinate S-adenosyl-L-methionine.

It belongs to the class I-like SAM-binding methyltransferase superfamily. rRNA adenine N(6)-methyltransferase family. RsmA subfamily.

The protein localises to the cytoplasm. The enzyme catalyses adenosine(1518)/adenosine(1519) in 16S rRNA + 4 S-adenosyl-L-methionine = N(6)-dimethyladenosine(1518)/N(6)-dimethyladenosine(1519) in 16S rRNA + 4 S-adenosyl-L-homocysteine + 4 H(+). Specifically dimethylates two adjacent adenosines (A1518 and A1519) in the loop of a conserved hairpin near the 3'-end of 16S rRNA in the 30S particle. May play a critical role in biogenesis of 30S subunits. This is Ribosomal RNA small subunit methyltransferase A from Nitrosospira multiformis (strain ATCC 25196 / NCIMB 11849 / C 71).